The sequence spans 357 residues: NmrA-like family domain-containing oxidoreductase notA' (357 aa).

NADP(+) contacts are provided by residues 13-18 (GATGAQ), 39-43 (RKPES), 60-61 (DG), 81-83 (TNS), lysine 140, and 164-167 (YMDV).

This sequence belongs to the NmrA-type oxidoreductase family.

Its function is as follows. NmrA-like family domain-containing oxidoreductase; part of the gene cluster that mediates the biosynthesis of notoamide, a fungal indole alkaloid that belongs to a family of natural products containing a characteristic bicyclo[2.2.2]diazaoctane core. The first step of notoamide biosynthesis involves coupling of L-proline and L-tryptophan by the bimodular NRPS notE', to produce cyclo-L-tryptophan-L-proline called brevianamide F. The reverse prenyltransferase notF' then acts as a deoxybrevianamide E synthase and converts brevianamide F to deoxybrevianamide E via reverse prenylation at C-2 of the indole ring leading to the bicyclo[2.2.2]diazaoctane core. Deoxybrevianamide E is further hydroxylated at C-6 of the indole ring, likely catalyzed by the cytochrome P450 monooxygenase notG', to yield 6-hydroxy-deoxybrevianamide E. 6-hydroxy-deoxybrevianamide E is a specific substrate of the prenyltransferase notC' for normal prenylation at C-7 to produce 6-hydroxy-7-prenyl-deoxybrevianamide, also called notoamide S. As the proposed pivotal branching point in notoamide biosynthesis, notoamide S can be diverted to notoamide E through an oxidative pyran ring closure putatively catalyzed by either notH' cytochrome P450 monooxygenase or the notD' FAD-linked oxidoreductase. This step would be followed by an indole 2,3-epoxidation-initiated pinacol-like rearrangement catalyzed by the notB' FAD-dependent monooxygenase leading to the formation of notoamide C and notoamide D. On the other hand notoamide S is converted to notoamide T by notH' (or notD'), a bifunctional oxidase that also functions as the intramolecular Diels-Alderase responsible for generation of (-)-notoamide T. To generate antipodal (+)-notoaminide T, notH (or notD) in Aspergillus strain MF297-2 is expected to catalyze a Diels-Alder reaction leading to the opposite stereochemistry. The remaining oxidoreductase notD' (or notH') likely catalyzes the oxidative pyran ring formation to yield (-)-stephacidin A. The FAD-dependent monooxygenase notI' is highly similar to notB' and is predicted to catalyze a similar conversion from (-)-stephacidin A to (+)-notoamide B via the 2,3-epoxidation of (-)-stephacidin A followed by a pinacol-type rearrangement. Finally, it remains unclear which enzyme could be responsible for the final hydroxylation steps leading to notoamide A and sclerotiamide. This Aspergillus versicolor protein is NmrA-like family domain-containing oxidoreductase notA'.